The primary structure comprises 396 residues: Ribosomal RNA large subunit methyltransferase I (396 aa).

In terms of domain architecture, PUA spans 2 to 79 (AVRIKLKPGR…REEEIDREFF (78 aa)).

Belongs to the methyltransferase superfamily. RlmI family.

It localises to the cytoplasm. It carries out the reaction cytidine(1962) in 23S rRNA + S-adenosyl-L-methionine = 5-methylcytidine(1962) in 23S rRNA + S-adenosyl-L-homocysteine + H(+). Specifically methylates the cytosine at position 1962 (m5C1962) of 23S rRNA. The chain is Ribosomal RNA large subunit methyltransferase I from Shewanella sp. (strain MR-7).